The sequence spans 125 residues: UPF0102 protein Mpop_0474 (125 aa).

Belongs to the UPF0102 family.

This Methylorubrum populi (strain ATCC BAA-705 / NCIMB 13946 / BJ001) (Methylobacterium populi) protein is UPF0102 protein Mpop_0474.